The following is an 88-amino-acid chain: UPF0223 protein OB1419 (88 aa).

It belongs to the UPF0223 family.

The sequence is that of UPF0223 protein OB1419 from Oceanobacillus iheyensis (strain DSM 14371 / CIP 107618 / JCM 11309 / KCTC 3954 / HTE831).